The primary structure comprises 188 residues: F-box only protein 36 (188 aa).

The F-box domain maps to 91–137 (FDFLERLSDDLLLNIISYLDLEDIARLCQTSHRFAKLCMSDKLWEQI).

As to quaternary structure, directly interacts with SKP1 and CUL1.

Its function is as follows. Substrate-recognition component of the SCF (SKP1-CUL1-F-box protein)-type E3 ubiquitin ligase complex. This Pongo abelii (Sumatran orangutan) protein is F-box only protein 36 (FBXO36).